The chain runs to 275 residues: Penicillin-insensitive murein endopeptidase (275 aa).

An N-terminal signal peptide occupies residues 1 to 19; the sequence is MKKWIAGLLALIAISPVMA. 3 cysteine pairs are disulfide-bonded: cysteine 44–cysteine 264, cysteine 187–cysteine 235, and cysteine 216–cysteine 223. Residues histidine 110, histidine 113, aspartate 120, aspartate 147, and histidine 211 each contribute to the Zn(2+) site. Positions 234–262 are disordered; sequence GCGAELESWFQPHQPSAKPGKTLPPPLPP.

It belongs to the peptidase M74 family. In terms of assembly, dimer. The cofactor is Zn(2+).

Its subcellular location is the periplasm. Functionally, murein endopeptidase that cleaves the D-alanyl-meso-2,6-diamino-pimelyl amide bond that connects peptidoglycan strands. Likely plays a role in the removal of murein from the sacculus. This is Penicillin-insensitive murein endopeptidase from Yersinia enterocolitica serotype O:8 / biotype 1B (strain NCTC 13174 / 8081).